The sequence spans 407 residues: Probable endo-beta-1,4-glucanase celB (407 aa).

The signal sequence occupies residues 1–18 (MALTLAATALVLLPLVTA). Asn136 carries N-linked (GlcNAc...) asparagine glycosylation. The Nucleophile role is filled by Glu216. Glu221 serves as the catalytic Proton donor.

It belongs to the glycosyl hydrolase 7 (cellulase C) family.

The protein resides in the secreted. It carries out the reaction Endohydrolysis of (1-&gt;4)-beta-D-glucosidic linkages in cellulose, lichenin and cereal beta-D-glucans.. Its function is as follows. Has endoglucanase activity on substrates containing beta-1,4 glycosidic bonds, like in carboxymethylcellulose (CMC), hydroxyethylcellulose (HEC) and beta-glucan. Involved in the degradation of complex natural cellulosic substrates. The chain is Probable endo-beta-1,4-glucanase celB (celB) from Neosartorya fischeri (strain ATCC 1020 / DSM 3700 / CBS 544.65 / FGSC A1164 / JCM 1740 / NRRL 181 / WB 181) (Aspergillus fischerianus).